Reading from the N-terminus, the 494-residue chain is MKDFNLFLLYGNSILPECILILSLIVTIIIDLISDEKNTPWLYLVSLTALVTSVVILLFQWKEEPVSTFFETFQINSFNNIFRLFILICSLLCIPLSIDYIQCTKTALTEFLLFILTATLGGMFLCCANDLVTIFVALECLGLSSYLLSGYTKKDVRSNEATMKYLLMGGASSSILVYGFSLLYGLSGGEIQLQRIVNGLLTTQMYNSTGMFISMIFLLVGVGFKLSLVPFHQWTPDVYEGSPTPVVAFFSVTSKVAALALATRLFNILFPSSSTEWHLLLEILAISSMILGNFIAVTQISMKRMLAYSSISQIGYIIIGVIAAESNNGYASMITYMLIYIFMNLGTFACITLFGLRTGTDNIRDYAGLSTKDPLLTLSLVLCLLSLGGIPPLSGFFGKLYLFWCGWKAGLYFLVPIALSTSVISMYYYLKIIKLLFTKQNRQLTIYIQNYKVSSYALIPKSSIEITMIICVVASTLPGILINPIIAIAQNTFF.

A run of 14 helical transmembrane segments spans residues S13–I33, T39–F59, I81–I101, A107–C127, L131–Y151, L166–L186, M211–F231, P243–T263, W277–V297, M305–E325, Y336–L356, L378–G398, L411–I433, and M468–I488.

It belongs to the complex I subunit 2 family. NDH is composed of at least 16 different subunits, 5 of which are encoded in the nucleus.

It localises to the plastid. It is found in the chloroplast thylakoid membrane. The enzyme catalyses a plastoquinone + NADH + (n+1) H(+)(in) = a plastoquinol + NAD(+) + n H(+)(out). It catalyses the reaction a plastoquinone + NADPH + (n+1) H(+)(in) = a plastoquinol + NADP(+) + n H(+)(out). Its function is as follows. NDH shuttles electrons from NAD(P)H:plastoquinone, via FMN and iron-sulfur (Fe-S) centers, to quinones in the photosynthetic chain and possibly in a chloroplast respiratory chain. The immediate electron acceptor for the enzyme in this species is believed to be plastoquinone. Couples the redox reaction to proton translocation, and thus conserves the redox energy in a proton gradient. This is NAD(P)H-quinone oxidoreductase subunit 2 B, chloroplastic from Angiopteris evecta (Mule's foot fern).